Reading from the N-terminus, the 624-residue chain is Chaperone protein HtpG (624 aa).

The segment at 1 to 336 (MKGQETRGFQ…SNDLPLNVSR (336 aa)) is a; substrate-binding. Residues 337-552 (EILQDSTVTR…ADEMSTQMAK (216 aa)) form a b region. The segment at 553–624 (LFAAAGQSVP…IRRMNQLLVS (72 aa)) is c.

The protein belongs to the heat shock protein 90 family. In terms of assembly, homodimer.

The protein resides in the cytoplasm. Functionally, molecular chaperone. Has ATPase activity. This is Chaperone protein HtpG from Salmonella typhi.